Here is a 346-residue protein sequence, read N- to C-terminus: Protein PXR1 (346 aa).

Disordered regions lie at residues 1-27 (MGLA…NTEN) and 146-315 (EDAE…QVSV). The segment covering 15–27 (DPNNTRWSRNTEN) has biased composition (polar residues). One can recognise a G-patch domain in the interval 25–79 (TENFGHRMLRSQGWEPGQYLGPQDASHAVYHTAASASHIKVALKEDNLGLGAKMN). A compositionally biased stretch (basic residues) spans 215 to 230 (SKSKKSHKSKKEKKRR). The segment covering 235–245 (ASDEQESEDEE) has biased composition (acidic residues). Residues 249 to 274 (KRRKKEKKERKERRREKREKKLKKKQ) show a composition bias toward basic residues. A compositionally biased stretch (polar residues) spans 293 to 314 (GVDTGASTPVASGTSTPVSQVS).

Belongs to the PINX1 family.

Its subcellular location is the nucleus. It localises to the nucleolus. Involved in rRNA-processing at A0, A1 and A2 sites and negatively regulates telomerase. This chain is Protein PXR1 (PXR1), found in Pyricularia oryzae (strain 70-15 / ATCC MYA-4617 / FGSC 8958) (Rice blast fungus).